Here is a 35-residue protein sequence, read N- to C-terminus: MPRRRRRASRPIRRRRRARRSTAVRRRRRVVRRRR.

The disordered stretch occupies residues 1–35 (MPRRRRRASRPIRRRRRARRSTAVRRRRRVVRRRR). Residues S9 and S21 each carry the phosphoserine modification.

Post-translationally, phosphorylated in immature sperm. Dephosphorylated in mature sperm allowing a stronger interaction with DNA. Gonads.

The protein localises to the nucleus. The protein resides in the chromosome. Protamines substitute for histones in the chromatin of sperm during the haploid phase of spermatogenesis. They compact sperm DNA into a highly condensed, stable and inactive complex. In Scomber scombrus (Atlantic mackerel), this protein is Sperm protamine alpha isoform 2.